The following is a 574-amino-acid chain: Proline--tRNA ligase (574 aa).

The protein belongs to the class-II aminoacyl-tRNA synthetase family. ProS type 1 subfamily. As to quaternary structure, homodimer.

The protein localises to the cytoplasm. It catalyses the reaction tRNA(Pro) + L-proline + ATP = L-prolyl-tRNA(Pro) + AMP + diphosphate. Its function is as follows. Catalyzes the attachment of proline to tRNA(Pro) in a two-step reaction: proline is first activated by ATP to form Pro-AMP and then transferred to the acceptor end of tRNA(Pro). As ProRS can inadvertently accommodate and process non-cognate amino acids such as alanine and cysteine, to avoid such errors it has two additional distinct editing activities against alanine. One activity is designated as 'pretransfer' editing and involves the tRNA(Pro)-independent hydrolysis of activated Ala-AMP. The other activity is designated 'posttransfer' editing and involves deacylation of mischarged Ala-tRNA(Pro). The misacylated Cys-tRNA(Pro) is not edited by ProRS. The chain is Proline--tRNA ligase from Buchnera aphidicola subsp. Baizongia pistaciae (strain Bp).